The chain runs to 895 residues: Serine-rich coiled-coil domain-containing protein 1 (895 aa).

Disordered stretches follow at residues 1–142, 154–177, 332–394, and 459–497; these read MGDS…KEPS, SGRS…KQST, ELHS…RTLG, and RSSS…SSKM. The segment covering 43 to 56 has biased composition (low complexity); it reads SSSPSSTNSSSGST. Residues 83 to 102 show a composition bias toward polar residues; sequence TEQNLSISNGAQPSHSNMQK. Residues 131 to 142 show a composition bias toward basic and acidic residues; sequence LTEDFEREKEPS. Residues 348 to 358 are compositionally biased toward polar residues; the sequence is SLQSTELSVGN. Residues 675–705 adopt a coiled-coil conformation; sequence MLRLQLKDRDELISQLQAELEKVQHLQKAFA. The segment at 731 to 753 is disordered; that stretch reads QGGRETTHRNRTMSQSHSTRDRK.

This sequence belongs to the CCSER family.

This Mus musculus (Mouse) protein is Serine-rich coiled-coil domain-containing protein 1 (Ccser1).